The sequence spans 340 residues: Cathepsin B (340 aa).

The first 17 residues, 1 to 17 (MSWSRSILCLLGAFANA), serve as a signal peptide directing secretion. Positions 18–79 (RSIPYYPPLS…ERVDFAEDMD (62 aa)) are cleaved as a propeptide — activation peptide. Asn38 carries N-linked (GlcNAc...) asparagine glycosylation. 6 cysteine pairs are disulfide-bonded: Cys93–Cys122, Cys105–Cys150, Cys141–Cys208, Cys142–Cys146, Cys179–Cys212, and Cys187–Cys198. Cys108 is an active-site residue. N-linked (GlcNAc...) asparagine glycosylation is present at Asn192. Active-site residues include His279 and Asn299.

The protein belongs to the peptidase C1 family. Dimer of a heavy chain and a light chain cross-linked by a disulfide bond.

The protein localises to the lysosome. It carries out the reaction Hydrolysis of proteins with broad specificity for peptide bonds. Preferentially cleaves -Arg-Arg-|-Xaa bonds in small molecule substrates (thus differing from cathepsin L). In addition to being an endopeptidase, shows peptidyl-dipeptidase activity, liberating C-terminal dipeptides.. Thiol protease which is believed to participate in intracellular degradation and turnover of proteins. Has also been implicated in tumor invasion and metastasis. The polypeptide is Cathepsin B (CTSB) (Gallus gallus (Chicken)).